The sequence spans 551 residues: Cytosolic Fe-S cluster assembly factor NAR1 (551 aa).

Residues cysteine 20, cysteine 57, cysteine 60, cysteine 63, cysteine 178, and cysteine 242 each coordinate [4Fe-4S] cluster. The disordered stretch occupies residues aspartate 395 to glycine 435. A compositionally biased stretch (polar residues) spans glutamate 421–serine 431. Cysteine 451 contacts [4Fe-4S] cluster.

This sequence belongs to the NARF family.

Its function is as follows. Component of the cytosolic Fe/S protein assembly machinery. Required for maturation of extramitochondrial Fe/S proteins. May play a role in the transfer of pre-assembled Fe/S clusters to target apoproteins. The polypeptide is Cytosolic Fe-S cluster assembly factor NAR1 (NAR1) (Candida glabrata (strain ATCC 2001 / BCRC 20586 / JCM 3761 / NBRC 0622 / NRRL Y-65 / CBS 138) (Yeast)).